The primary structure comprises 575 residues: Homocysteine/cysteine synthase (575 aa).

Lys376 carries the post-translational modification N6-(pyridoxal phosphate)lysine.

The protein belongs to the trans-sulfuration enzymes family. MET7 subfamily. Requires pyridoxal 5'-phosphate as cofactor.

The protein localises to the cytoplasm. It carries out the reaction O-acetyl-L-homoserine + methanethiol = L-methionine + acetate + H(+). It catalyses the reaction O-acetyl-L-homoserine + hydrogen sulfide = L-homocysteine + acetate. The catalysed reaction is O-acetyl-L-serine + hydrogen sulfide = L-cysteine + acetate. It functions in the pathway amino-acid biosynthesis; L-methionine biosynthesis via de novo pathway; L-homocysteine from O-acetyl-L-homoserine. Its function is as follows. Plays a role in inorganic sulfur assimilation during sulfur-limited conditions; catalyzes the conversion of O-acetyl-L-homoserine (OAH) into homocysteine in the methionine biosynthesis pathway. Also catalyzes the conversion of O-acetylserine (OAS) into cysteine, the last step in the cysteine biosynthesis pathway. However, it seems that in S.cerevisiae cysteine biosynthesis occurs exclusively through the cystathionine pathway and not via direct incorporation of sulfur into OAS. It therefore has no metabolic role in cysteine biosynthesis and may only have a regulatory role controlling OAS levels. The sequence is that of Homocysteine/cysteine synthase from Saccharomyces cerevisiae (strain ATCC 204508 / S288c) (Baker's yeast).